The primary structure comprises 476 residues: Proton-coupled amino acid transporter 1 (476 aa).

The segment covering 1-15 (MSTQRLRNEDYHDYS) has biased composition (basic and acidic residues). A disordered region spans residues 1-32 (MSTQRLRNEDYHDYSSTDVSPEESPSEGLNNL). Residues 1 to 51 (MSTQRLRNEDYHDYSSTDVSPEESPSEGLNNLSSPGSYQRFGQSNSTTWFQ) lie on the Cytoplasmic side of the membrane. A helical membrane pass occupies residues 52 to 72 (TLIHLLKGNIGTGLLGLPLAV). Residues 73–78 (KNAGIV) are Extracellular-facing. A helical transmembrane segment spans residues 79-99 (MGPISLLIIGIVAVHCMGILV). At 100–141 (KCAHHFCRRLNKSFVDYGDTVMYGLESSPCSWLRNHAHWGRR) the chain is on the cytoplasmic side. Residues 142–162 (VVDFFLIVTQLGFCCVYFVFL) form a helical membrane-spanning segment. Residues 163–190 (ADNFKQVIEAANGTTNNCHNNETVILTP) are Extracellular-facing. Residues Asn174 and Asn183 are each glycosylated (N-linked (GlcNAc...) asparagine). A disulfide bridge connects residues Cys180 and Cys329. A helical transmembrane segment spans residues 191–211 (TMDSRLYMLSFLPFLVLLVFI). Topologically, residues 212 to 215 (RNLR) are cytoplasmic. The chain crosses the membrane as a helical span at residues 216–236 (ALSIFSLLANITMLVSLVMIY). Residues 237–257 (QFIVQRIPDPSHLPLVAPWKT) lie on the Extracellular side of the membrane. Residues 258–278 (YPLFFGTAIFSFEGIGMVLPL) form a helical membrane-spanning segment. Residues 279–289 (ENKMKDPRKFP) lie on the Cytoplasmic side of the membrane. A helical membrane pass occupies residues 290-310 (LILYLGMVIVTILYISLGCLG). Over 311-342 (YLQFGANIQGSITLNLPNCWLYQSVKLLYSIG) the chain is Extracellular. A helical transmembrane segment spans residues 343-363 (IFFTYALQFYVPAEIIIPFFV). At 364 to 372 (SRAPEHCEL) the chain is on the cytoplasmic side. The chain crosses the membrane as a helical span at residues 373–393 (VVDLFVRTVLVCLTCILAILI). Residues 394–397 (PRLD) lie on the Extracellular side of the membrane. A helical transmembrane segment spans residues 398 to 418 (LVISLVGSVSSSALALIIPPL). At 419-439 (LEVTTFYSEGMSPLTIFKDAL) the chain is on the cytoplasmic side. The chain crosses the membrane as a helical span at residues 440 to 460 (ISILGFVGFVVGTYEALYELI). At 461 to 476 (QPSNAPIFINSTCAFI) the chain is on the extracellular side. Asn470 carries N-linked (GlcNAc...) asparagine glycosylation.

The protein belongs to the amino acid/polyamine transporter 2 family.

Its subcellular location is the cell membrane. The protein resides in the apical cell membrane. The protein localises to the lysosome membrane. The enzyme catalyses glycine(in) + H(+)(in) = glycine(out) + H(+)(out). It catalyses the reaction L-alanine(in) + H(+)(in) = L-alanine(out) + H(+)(out). The catalysed reaction is D-alanine(in) + H(+)(in) = D-alanine(out) + H(+)(out). It carries out the reaction L-proline(out) + H(+)(out) = L-proline(in) + H(+)(in). The enzyme catalyses D-proline(out) + H(+)(out) = D-proline(in) + H(+)(in). It catalyses the reaction D-serine(out) + H(+)(out) = D-serine(in) + H(+)(in). The catalysed reaction is L-serine(in) + H(+)(in) = L-serine(out) + H(+)(out). It carries out the reaction 4-aminobutanoate(in) + H(+)(in) = 4-aminobutanoate(out) + H(+)(out). The enzyme catalyses beta-alanine(in) + H(+)(in) = beta-alanine(out) + H(+)(out). Electrogenic proton/amino acid symporter with selectivity for small apolar L-amino acids, their D-enantiomers and selected amino acid derivatives such as 4-aminobutanoate/GABA. May be involved in the efflux from the lysosomal compartment of neutral amino acids resulting from proteolysis. May play a role in specifying sites for exocytosis in neurons. This chain is Proton-coupled amino acid transporter 1, found in Homo sapiens (Human).